A 121-amino-acid polypeptide reads, in one-letter code: Large ribosomal subunit protein bL12 (121 aa).

It belongs to the bacterial ribosomal protein bL12 family. As to quaternary structure, homodimer. Part of the ribosomal stalk of the 50S ribosomal subunit. Forms a multimeric L10(L12)X complex, where L10 forms an elongated spine to which 2 to 4 L12 dimers bind in a sequential fashion. Binds GTP-bound translation factors.

Functionally, forms part of the ribosomal stalk which helps the ribosome interact with GTP-bound translation factors. Is thus essential for accurate translation. This chain is Large ribosomal subunit protein bL12, found in Lachnospira eligens (strain ATCC 27750 / DSM 3376 / VPI C15-48 / C15-B4) (Eubacterium eligens).